Consider the following 842-residue polypeptide: Serine/threonine-protein phosphatase 4 regulatory subunit 3 (842 aa).

Regulatory subunit 3 (R3) of the histone H2A phosphatase complex (HTP-C) consisting of PPH3, PSY2 and PSY4.

Its subcellular location is the nucleus. In terms of biological role, core regulatory subunit of the histone H2A phosphatase complex, which dephosphorylates H2AS128ph (gamma-H2A) that has been displaced from sites of DNA lesions in the double-stranded DNA break repair process. Dephosphorylation is necessary for efficient recovery from the DNA damage checkpoint. This Candida glabrata (strain ATCC 2001 / BCRC 20586 / JCM 3761 / NBRC 0622 / NRRL Y-65 / CBS 138) (Yeast) protein is Serine/threonine-protein phosphatase 4 regulatory subunit 3 (PSY2).